Consider the following 305-residue polypeptide: Glycine cleavage system transcriptional activator (305 aa).

The 58-residue stretch at 6 to 63 folds into the HTH lysR-type domain; it reads PPLNALRVFDAAARHLSFTRAAEELFVTQAAVSHQIKSLEDFLGLKLFRRRNRSLLLT. Positions 23-42 form a DNA-binding region, H-T-H motif; sequence FTRAAEELFVTQAAVSHQIK.

Belongs to the LysR transcriptional regulatory family.

It localises to the cytoplasm. In terms of biological role, regulatory protein for the glycine cleavage system operon (gcv). Mediates activation of gcv by glycine and repression by purines. GcvA is negatively autoregulated. Binds to three sites upstream of the gcv promoter. This Escherichia coli O157:H7 protein is Glycine cleavage system transcriptional activator (gcvA).